The chain runs to 275 residues: Putative phosphoenolpyruvate synthase regulatory protein (275 aa).

ADP is bound at residue glycine 153–threonine 160.

Belongs to the pyruvate, phosphate/water dikinase regulatory protein family. PSRP subfamily.

It carries out the reaction [pyruvate, water dikinase] + ADP = [pyruvate, water dikinase]-phosphate + AMP + H(+). The enzyme catalyses [pyruvate, water dikinase]-phosphate + phosphate + H(+) = [pyruvate, water dikinase] + diphosphate. In terms of biological role, bifunctional serine/threonine kinase and phosphorylase involved in the regulation of the phosphoenolpyruvate synthase (PEPS) by catalyzing its phosphorylation/dephosphorylation. This Nitrosomonas eutropha (strain DSM 101675 / C91 / Nm57) protein is Putative phosphoenolpyruvate synthase regulatory protein.